Here is a 542-residue protein sequence, read N- to C-terminus: POTE ankyrin domain family member C (542 aa).

7 ANK repeats span residues 138 to 171 (EDLD…KRDK), 172 to 201 (QKRT…QLNV), 205 to 234 (KKRT…DQNI), 238 to 267 (YGNT…DIES), 271 to 300 (CGLT…NLNA), 304 to 333 (YGRT…DVSS), and 337 to 373 (SGQT…SENS). Residues 369–494 (SSENSNPEQD…NTGISQDEIL (126 aa)) are disordered. Composition is skewed to basic and acidic residues over residues 377–392 (QDLK…RLKV), 401–412 (MSQEPEINKDCD), and 466–481 (EEYH…KQLS). Residues 482-494 (EEQNTGISQDEIL) are compositionally biased toward polar residues. The stretch at 489-538 (SQDEILTNKQKQIEVAEKKMNSELSLSHKKEEDLLRENSMLQEEIAMLIS) forms a coiled coil.

Belongs to the POTE family. As to expression, expressed in prostate and testis.

The protein is POTE ankyrin domain family member C (POTEC) of Homo sapiens (Human).